We begin with the raw amino-acid sequence, 122 residues long: Large ribosomal subunit protein uL14c (122 aa).

It belongs to the universal ribosomal protein uL14 family. In terms of assembly, part of the 50S ribosomal subunit.

It localises to the plastid. Its subcellular location is the cyanelle. Its function is as follows. Binds to 23S rRNA. This is Large ribosomal subunit protein uL14c from Cyanophora paradoxa.